A 196-amino-acid polypeptide reads, in one-letter code: MLERIKGCFTESIQTQIAAAEALPDAISRAALTLVQSLLNGNKILCCGNGASGANAQHFAATLINRFETERPSLPAIALNADSVVLTAIGNDRLHDEIYAKQVRALGHAGDVLLAISTRGNSRDIVKAVEAAVTRDMTIVALTGYDGGELAGLLGQQDVEIRIPSHHSTRIQEMHMLTVNCLCDLIDNTLFPHQAD.

Residues L34 to D196 form the SIS domain.

The protein belongs to the SIS family. DiaA subfamily. As to quaternary structure, homotetramer; dimer of dimers.

Required for the timely initiation of chromosomal replication via direct interactions with the DnaA initiator protein. The protein is DnaA initiator-associating protein DiaA of Edwardsiella ictaluri (strain 93-146).